The following is a 316-amino-acid chain: MYPAITPLQAGLQWWAVAGRQGVAELWQVQVETAADGADGEVEETLYWYLSELGLPHVERQILAGRLVLRGYLSGETPEGVMERWREHIRERLTQKAEIGWYAVERRDWQAAWREQWRPIFVGERLVIWPVWLPDPPGDRLVIPLDPGMAFGTGEHATTRLCLRALESVPDLGTFADVGCGSGVLTVAALKLGAGRGWAVDTDDLAVVSTRKNLEISGLEERVTVARGSTEQLSGPLDGVVSNILAEVIANLAPEFRRLVHPGGWGIFSGLLLTQAPRVVEALAGQGFALSETLSEGDWACLVGRFSADRPRSAGS.

4 residues coordinate S-adenosyl-L-methionine: Thr-159, Gly-179, Asp-201, and Asn-243.

It belongs to the methyltransferase superfamily. PrmA family.

It localises to the cytoplasm. The catalysed reaction is L-lysyl-[protein] + 3 S-adenosyl-L-methionine = N(6),N(6),N(6)-trimethyl-L-lysyl-[protein] + 3 S-adenosyl-L-homocysteine + 3 H(+). Methylates ribosomal protein L11. This chain is Ribosomal protein L11 methyltransferase, found in Gloeobacter violaceus (strain ATCC 29082 / PCC 7421).